Consider the following 440-residue polypeptide: L-seryl-tRNA(Sec) selenium transferase (440 aa).

N6-(pyridoxal phosphate)lysine is present on lysine 282.

Belongs to the SelA family. Pyridoxal 5'-phosphate is required as a cofactor.

Its subcellular location is the cytoplasm. It carries out the reaction L-seryl-tRNA(Sec) + selenophosphate + H(+) = L-selenocysteinyl-tRNA(Sec) + phosphate. Its pathway is aminoacyl-tRNA biosynthesis; selenocysteinyl-tRNA(Sec) biosynthesis; selenocysteinyl-tRNA(Sec) from L-seryl-tRNA(Sec) (bacterial route): step 1/1. Functionally, converts seryl-tRNA(Sec) to selenocysteinyl-tRNA(Sec) required for selenoprotein biosynthesis. In Campylobacter jejuni subsp. doylei (strain ATCC BAA-1458 / RM4099 / 269.97), this protein is L-seryl-tRNA(Sec) selenium transferase.